Consider the following 95-residue polypeptide: Non-specific lipid-transfer protein (95 aa).

3 disulfide bridges follow: Cys4–Cys52, Cys14–Cys29, and Cys50–Cys90.

It belongs to the plant LTP family. Seeds.

Plant non-specific lipid-transfer proteins transfer phospholipids as well as galactolipids across membranes. May play a role in wax or cutin deposition in the cell walls of expanding epidermal cells and certain secretory tissues. The polypeptide is Non-specific lipid-transfer protein (Eleusine coracana (Indian finger millet)).